A 96-amino-acid polypeptide reads, in one-letter code: Putative pterin-4-alpha-carbinolamine dehydratase (96 aa).

The protein belongs to the pterin-4-alpha-carbinolamine dehydratase family.

The enzyme catalyses (4aS,6R)-4a-hydroxy-L-erythro-5,6,7,8-tetrahydrobiopterin = (6R)-L-erythro-6,7-dihydrobiopterin + H2O. This chain is Putative pterin-4-alpha-carbinolamine dehydratase, found in Metallosphaera sedula (strain ATCC 51363 / DSM 5348 / JCM 9185 / NBRC 15509 / TH2).